The chain runs to 535 residues: MASNDEGMAPSLGSPWASQTGPWDAILKAVKDQLPSLDSDSSLSDYGEEELSIFQRNQTALIPDLSEELAEDPADGDKSRTWAAAAEESLPEVCGTQKSVRLCVCNPALVPAELATEPGNRRNTRTKDASSQEGRDPGRPVETSGEVSAFLGMAEETPRWLGSDLGSLSFNTKGSQGPPWDPQAKASLSRHEGDPKAEPASQESVNRRALRQERRKMIEKDILQKVTRDACGPASSDQGGVKEAPCHAVESAARSKMPLAEPPEGPPVLSLQQLEAWDLDYILQSLAGQEDNQGNRGPGTVWWAADRRQVQDRTVPSADDRLMEQLALLCTMQSRASACAWKVPADTPQDTEEAGAGSRCSSRKPGSEAGPGPQLAQGMRLNTEPPTIFIDLRQTVPPDHLSPARSRGSSHSSSDSEEEEEEVEMAALGDAEGASPSSLGLRSCTGKSQLLQQLRAFRKGIAQPKLPANKGPGGERAQAPEDTAASGTVRKQHMKLCAKGQSAQARLPRGRPRALGDAPEPGAAREALMPPLDQL.

5 disordered regions span residues 112-215 (AELA…QERR), 228-267 (RDAC…EGPP), 344-380 (PADT…QGMR), 395-444 (TVPP…LRSC), and 461-535 (IAQP…LDQL). Residues 125-139 (RTKDASSQEGRDPGR) show a composition bias toward basic and acidic residues. Over residues 166-175 (GSLSFNTKGS) the composition is skewed to polar residues. S175 bears the Phosphoserine mark. Phosphoserine is present on S362. A compositionally biased stretch (acidic residues) spans 415 to 424 (DSEEEEEEVE). The span at 435–444 (SPSSLGLRSC) shows a compositional bias: polar residues.

Its subcellular location is the dynein axonemal particle. The protein localises to the cytoplasm. Its function is as follows. In cyliated cells, dynein axonemal particle-specific protein required for deployment of ODA to the axoneme. Interacts with outer dynein arm (ODA) subunits. This Macaca fascicularis (Crab-eating macaque) protein is Dynein axonemal assembly factor 8 (DNAAF8).